The chain runs to 286 residues: Diaminopimelate epimerase (286 aa).

The substrate site is built by Asn22, Gln56, and Asn76. Residue Cys85 is the Proton donor of the active site. Substrate contacts are provided by residues 86-87 (GN), Asn169, Asn202, and 220-221 (ER). Catalysis depends on Cys229, which acts as the Proton acceptor. 230 to 231 (GS) serves as a coordination point for substrate.

The protein belongs to the diaminopimelate epimerase family. In terms of assembly, homodimer.

Its subcellular location is the cytoplasm. It carries out the reaction (2S,6S)-2,6-diaminopimelate = meso-2,6-diaminopimelate. It participates in amino-acid biosynthesis; L-lysine biosynthesis via DAP pathway; DL-2,6-diaminopimelate from LL-2,6-diaminopimelate: step 1/1. In terms of biological role, catalyzes the stereoinversion of LL-2,6-diaminopimelate (L,L-DAP) to meso-diaminopimelate (meso-DAP), a precursor of L-lysine and an essential component of the bacterial peptidoglycan. The sequence is that of Diaminopimelate epimerase from Buchnera aphidicola subsp. Baizongia pistaciae (strain Bp).